Reading from the N-terminus, the 1189-residue chain is Pesticidal crystal protein Cry1Ca (1189 aa).

It belongs to the delta endotoxin family.

Promotes colloidosmotic lysis by binding to the midgut epithelial cells of many lepidopteran larvae including Spodoptera species. This is Pesticidal crystal protein Cry1Ca (cry1Ca) from Bacillus thuringiensis subsp. entomocidus.